A 411-amino-acid polypeptide reads, in one-letter code: Putative competence-damage inducible protein (411 aa).

This sequence belongs to the CinA family.

The protein is Putative competence-damage inducible protein of Desulforamulus reducens (strain ATCC BAA-1160 / DSM 100696 / MI-1) (Desulfotomaculum reducens).